Reading from the N-terminus, the 467-residue chain is Asparagine--tRNA ligase (467 aa).

This sequence belongs to the class-II aminoacyl-tRNA synthetase family. Homodimer.

Its subcellular location is the cytoplasm. The catalysed reaction is tRNA(Asn) + L-asparagine + ATP = L-asparaginyl-tRNA(Asn) + AMP + diphosphate + H(+). The chain is Asparagine--tRNA ligase from Legionella pneumophila (strain Lens).